The primary structure comprises 680 residues: Fermitin family homolog 2 (680 aa).

Positions histidine 40–lysine 81 are interaction with membranes containing phosphatidylinositol phosphate. The tract at residues leucine 141–glutamate 165 is disordered. Phosphoserine is present on residues serine 159, serine 181, serine 339, and serine 351. Residues methionine 189–lysine 661 enclose the FERM domain. The PH domain maps to lysine 380–lysine 476. Lysine 383 is a binding site for a 1,2-diacyl-sn-glycero-3-phospho-(1D-myo-inositol-3,4,5-trisphosphate). A Phosphoserine modification is found at serine 666.

Belongs to the kindlin family. In terms of assembly, interacts with ILK. Interacts with FBLIM1. Interacts with ITGB1 and ITGB3. Interacts with active, unphosphorylated CTNNB1. Identified in a complex with CTNNB1 and TCF7L2/TCF4. Interacts with ITGB1; the interaction is inhibited in presence of ITGB1BP1. Ubiquitous. Found in numerous tumor tissues.

The protein localises to the cytoplasm. Its subcellular location is the cell cortex. It is found in the cytoskeleton. The protein resides in the stress fiber. It localises to the cell junction. The protein localises to the focal adhesion. Its subcellular location is the membrane. It is found in the cell projection. The protein resides in the lamellipodium membrane. It localises to the nucleus. The protein localises to the myofibril. Its subcellular location is the sarcomere. It is found in the i band. The protein resides in the cell surface. Its function is as follows. Scaffolding protein that enhances integrin activation mediated by TLN1 and/or TLN2, but activates integrins only weakly by itself. Binds to membranes enriched in phosphoinositides. Enhances integrin-mediated cell adhesion onto the extracellular matrix and cell spreading; this requires both its ability to interact with integrins and with phospholipid membranes. Required for the assembly of focal adhesions. Participates in the connection between extracellular matrix adhesion sites and the actin cytoskeleton and also in the orchestration of actin assembly and cell shape modulation. Recruits FBLIM1 to focal adhesions. Plays a role in the TGFB1 and integrin signaling pathways. Stabilizes active CTNNB1 and plays a role in the regulation of transcription mediated by CTNNB1 and TCF7L2/TCF4 and in Wnt signaling. The polypeptide is Fermitin family homolog 2 (FERMT2) (Homo sapiens (Human)).